The sequence spans 146 residues: Hemoglobin subunit beta (146 aa).

N-acetylvaline is present on Val-1. Residues 2–146 (HLTPEEKTAV…VANALAHKYH (145 aa)) form the Globin domain. The residue at position 12 (Thr-12) is a Phosphothreonine. Ser-44 is modified (phosphoserine). Lys-59 is subject to N6-acetyllysine. A heme b-binding site is contributed by His-63. Lys-82 carries the post-translational modification N6-acetyllysine. His-92 is a heme b binding site. Cys-93 carries the S-nitrosocysteine modification. Lys-144 bears the N6-acetyllysine mark.

The protein belongs to the globin family. As to quaternary structure, heterotetramer of two alpha chains and two beta chains. As to expression, red blood cells.

In terms of biological role, involved in oxygen transport from the lung to the various peripheral tissues. The polypeptide is Hemoglobin subunit beta (HBB) (Mandrillus sphinx (Mandrill)).